The chain runs to 270 residues: Fibroblast growth factor 5 (270 aa).

An N-terminal signal peptide occupies residues M1–A20. Positions R25–S86 are disordered. The span at P41–R69 shows a compositional bias: low complexity. Positions L76–S86 are enriched in polar residues. N112 carries N-linked (GlcNAc...) asparagine glycosylation. Residues E237–S257 are disordered.

Belongs to the heparin-binding growth factors family. In terms of assembly, interacts with FGFR1 and FGFR2. Affinity between fibroblast growth factors (FGFs) and their receptors is increased by heparan sulfate glycosaminoglycans that function as coreceptors.

It localises to the secreted. Plays an important role in the regulation of cell proliferation and cell differentiation. Required for normal regulation of the hair growth cycle. Functions as an inhibitor of hair elongation by promoting progression from anagen, the growth phase of the hair follicle, into catagen the apoptosis-induced regression phase. The protein is Fibroblast growth factor 5 (FGF5) of Bos taurus (Bovine).